The primary structure comprises 93 residues: Acylphosphatase (93 aa).

Residues 4–91 form the Acylphosphatase-like domain; it reads TLHLVIHGRV…PAGTGFRVAA (88 aa). Catalysis depends on residues Arg19 and Asn37.

Belongs to the acylphosphatase family.

It catalyses the reaction an acyl phosphate + H2O = a carboxylate + phosphate + H(+). The chain is Acylphosphatase (acyP) from Azorhizobium caulinodans (strain ATCC 43989 / DSM 5975 / JCM 20966 / LMG 6465 / NBRC 14845 / NCIMB 13405 / ORS 571).